Here is a 341-residue protein sequence, read N- to C-terminus: Tryptophan--tRNA ligase (341 aa).

ATP contacts are provided by residues 11-13 (RPT) and 19-20 (GH). The 'HIGH' region signature appears at 12–20 (PTGKLHIGH). Asp-140 lines the L-tryptophan pocket. Residues 152–154 (GND), Leu-194, and 202–206 (KMSKS) contribute to the ATP site. The short motif at 202–206 (KMSKS) is the 'KMSKS' region element.

Belongs to the class-I aminoacyl-tRNA synthetase family. As to quaternary structure, homodimer.

It localises to the cytoplasm. It carries out the reaction tRNA(Trp) + L-tryptophan + ATP = L-tryptophyl-tRNA(Trp) + AMP + diphosphate + H(+). In terms of biological role, catalyzes the attachment of tryptophan to tRNA(Trp). The protein is Tryptophan--tRNA ligase of Lactococcus lactis subsp. lactis (strain IL1403) (Streptococcus lactis).